Here is a 406-residue protein sequence, read N- to C-terminus: MSQDVLADKPLLSRSMVAVLCAQFFSAFGDNALLFATLALIKQQLYPDWSQPILQMAFVATYIVLAPFVGQIADGFAKGRVMMVANGLKLAGALVICFGLNPFLGYSLVGVGAAAYSPAKYGILGEITSGEQLVKANGMMEASTIAAILLGSVAGGILADWHLMAALGVCALVYAIAVIANLFIPRLAAARSGASWRPRAMTGSFFTACRLLWQDSETRFSLAGTSLFWGAGVTLRFLLVLWVPVALGIADNATPTLLNAMVAIGIVVGAGAAARFVTLKTVKRCLPAGVLIGVMVTIFSLQNSMPMAYLLLIIIGILGGFFVVPLNALLQERGKHSVGAGNAIAVQNLGENTAMLFMLGLYSLVVKLGAPVVAVGVGFGVVFALAIALLWGWQWRQQRQKTRQPE.

Helical transmembrane passes span 16-36, 53-73, 91-111, 139-159, 164-184, 227-247, 253-273, 285-305, 310-330, 349-369, and 372-392; these read MVAV…LLFA, ILQM…GQIA, AGAL…LVGV, MMEA…GILA, MAAL…NLFI, LFWG…PVAL, ATPT…AGAA, CLPA…QNSM, LLLI…NALL, LGEN…VKLG, and VVAV…LLWG.

The protein belongs to the major facilitator superfamily. LplT (TC 2.A.1.42) family.

It localises to the cell inner membrane. In terms of biological role, catalyzes the facilitated diffusion of 2-acyl-glycero-3-phosphoethanolamine (2-acyl-GPE) into the cell. This is Lysophospholipid transporter LplT from Yersinia pestis bv. Antiqua (strain Antiqua).